The following is a 699-amino-acid chain: eEF1A lysine and N-terminal methyltransferase (699 aa).

Residue Met1 is modified to N-acetylmethionine. Ser267 is subject to Phosphoserine. The disordered stretch occupies residues 433–460 (VSHRAQKKRKKDRKKHRPADTPEDLPAA). Basic residues predominate over residues 436–449 (RAQKKRKKDRKKHR).

Belongs to the methyltransferase superfamily. Forms a tripartite complex containing GAB1, METTL13 and SPRY2. Within the complex interacts with GAB1 and SPRY2.

It localises to the cytoplasm. It is found in the nucleus. The protein localises to the mitochondrion. It carries out the reaction L-lysyl-[protein] + S-adenosyl-L-methionine = N(6)-methyl-L-lysyl-[protein] + S-adenosyl-L-homocysteine + H(+). The catalysed reaction is N(6)-methyl-L-lysyl-[protein] + S-adenosyl-L-methionine = N(6),N(6)-dimethyl-L-lysyl-[protein] + S-adenosyl-L-homocysteine + H(+). It catalyses the reaction N-terminal glycyl-L-lysyl-L-glutamyl-[protein] + 3 S-adenosyl-L-methionine = N-terminal N,N,N-trimethyl-glycyl-L-lysyl-L-glutamyl-[protein] + 3 S-adenosyl-L-homocysteine + 3 H(+). Dual methyltransferase that catalyzes methylation of elongation factor 1-alpha (EEF1A1 and EEF1A2) at two different positions, and is therefore involved in the regulation of mRNA translation. Via its C-terminus, methylates EEF1A1 and EEF1A2 at the N-terminal residue 'Gly-2'. Via its N-terminus dimethylates EEF1A1 and EEF1A2 at residue 'Lys-55'. Has no activity towards core histones H2A, H2B, H3 and H4. This is eEF1A lysine and N-terminal methyltransferase (METTL13) from Bos taurus (Bovine).